Reading from the N-terminus, the 288-residue chain is Acetylglutamate kinase (288 aa).

Substrate contacts are provided by residues 73 to 74, arginine 95, and asparagine 186; that span reads GG.

The protein belongs to the acetylglutamate kinase family. ArgB subfamily.

It is found in the cytoplasm. The catalysed reaction is N-acetyl-L-glutamate + ATP = N-acetyl-L-glutamyl 5-phosphate + ADP. Its pathway is amino-acid biosynthesis; L-arginine biosynthesis; N(2)-acetyl-L-ornithine from L-glutamate: step 2/4. Catalyzes the ATP-dependent phosphorylation of N-acetyl-L-glutamate. This Pelagibacter ubique (strain HTCC1062) protein is Acetylglutamate kinase.